Consider the following 63-residue polypeptide: Large ribosomal subunit protein uL29 (63 aa).

This sequence belongs to the universal ribosomal protein uL29 family.

The chain is Large ribosomal subunit protein uL29 from Shewanella pealeana (strain ATCC 700345 / ANG-SQ1).